Consider the following 161-residue polypeptide: PTS system glucose-specific EIIA component (161 aa).

In terms of domain architecture, PTS EIIA type-1 spans 31–135 (DPVFSKKIVG…SILTPVVISN (105 aa)). Residues His-68 and His-83 each coordinate Zn(2+). The active-site Tele-phosphohistidine intermediate; for EIIA activity is the His-83. Residue His-83 is modified to Phosphohistidine; by HPr.

The cofactor is Zn(2+).

It is found in the cytoplasm. The phosphoenolpyruvate-dependent sugar phosphotransferase system (sugar PTS), a major carbohydrate active transport system, catalyzes the phosphorylation of incoming sugar substrates concomitantly with their translocation across the cell membrane. The enzyme II complex composed of PtsG and Crr is involved in glucose transport. This chain is PTS system glucose-specific EIIA component (crr), found in Buchnera aphidicola subsp. Acyrthosiphon pisum (strain APS) (Acyrthosiphon pisum symbiotic bacterium).